Consider the following 620-residue polypeptide: MAU2 chromatid cohesion factor homolog (620 aa).

TPR repeat units lie at residues 452–485 (GGFYYVQGLHAFHKNSFHEAKRFLRETLKMANAE) and 492–525 (SCSLVLLSHVFLSIGNSKESMNMVTPAMQLASKI).

It belongs to the SCC4/mau-2 family. As to quaternary structure, interacts with Nipped-B to form the cohesin loading complex.

The protein resides in the nucleus. It is found in the nucleoplasm. Its function is as follows. Required for association of the cohesin complex with chromatin during interphase. Plays a role in sister chromatid cohesion and normal progression through prometaphase. This chain is MAU2 chromatid cohesion factor homolog, found in Drosophila persimilis (Fruit fly).